Consider the following 574-residue polypeptide: Putative ABC transporter ATP-binding protein VV2_1533 (574 aa).

2 consecutive ABC transporter domains span residues 3-244 (IEFS…GIRE) and 299-533 (LDVR…ANLT). Residues 37–44 (GPSGSGKS) and 332–339 (GKNGSGKS) each bind ATP.

Belongs to the ABC transporter superfamily.

Its subcellular location is the cell inner membrane. In terms of biological role, probably part of an ABC transporter complex. Responsible for energy coupling to the transport system. In Vibrio vulnificus (strain CMCP6), this protein is Putative ABC transporter ATP-binding protein VV2_1533.